The primary structure comprises 285 residues: Phospholipid phosphatase 1 (285 aa).

Topologically, residues 1 to 6 are cytoplasmic; sequence MFDKTR. A PDZ-binding; involved in localization to the apical cell membrane motif is present at residues 5-7; sequence TRL. Residues 7-27 form a helical membrane-spanning segment; that stretch reads LPYVALDVLCVLLAGLPFAIL. The Extracellular portion of the chain corresponds to 28–53; the sequence is TSRHTPFQRGLFCNDESIKYPYKEDT. Residues 54–74 form a helical membrane-spanning segment; sequence IPYPLLGGIIIPFSIIVMIVG. Residues 75-94 are Cytoplasmic-facing; sequence ETLSVYFNLLHSNSFIRNNY. Residues 95–115 traverse the membrane as a helical segment; the sequence is IATIYKAIGTFLFGAAASQSL. Residues 116–164 are Extracellular-facing; the sequence is TDIAKYSIGRLRPHFLDVCDPDWSKINCSDGYIENYICRGNAQKVKEGR. A phosphatase sequence motif I region spans residues 120-128; the sequence is KYSIGRLRP. Asn-142 carries N-linked (GlcNAc...) asparagine glycosylation. The helical transmembrane segment at 165 to 185 threads the bilayer; it reads LSFYSGHSSFSMYCMLFVALY. A phosphatase sequence motif II region spans residues 168–171; sequence YSGH. The active-site Proton donors is the His-171. Topologically, residues 186–196 are cytoplasmic; sequence LQARMKGDWAR. A helical transmembrane segment spans residues 197–216; sequence LLRPTLQFGLVAVSIYVGLS. The interval 216 to 227 is phosphatase sequence motif III; it reads SRVSDYKHHWSD. At 217 to 229 the chain is on the extracellular side; the sequence is RVSDYKHHWSDVL. Residue His-223 is the Nucleophile of the active site. The chain crosses the membrane as a helical span at residues 230–250; that stretch reads TGLIQGALVAIVVAVYVSDFF. At 251-285 the chain is on the cytoplasmic side; it reads KERNSPFKERKEEDSHTTLHETPTTGNHYRNSHQP. The span at 257 to 269 shows a compositional bias: basic and acidic residues; that stretch reads FKERKEEDSHTTL. The disordered stretch occupies residues 257 to 285; it reads FKERKEEDSHTTLHETPTTGNHYRNSHQP. Positions 270–285 are enriched in polar residues; it reads HETPTTGNHYRNSHQP.

It belongs to the PA-phosphatase related phosphoesterase family. Forms functional homodimers and homooligomers that are not required for substrate recognition and catalytic activity. Can also form heterooligomers with PLPP2 and PLPP3. N-glycosylated. N-linked sugars are of the complex type. N-glycosylation is not required for the phosphatase activity.

It localises to the cell membrane. It is found in the apical cell membrane. The protein localises to the membrane raft. The protein resides in the membrane. Its subcellular location is the caveola. The catalysed reaction is a 1,2-diacyl-sn-glycero-3-phosphate + H2O = a 1,2-diacyl-sn-glycerol + phosphate. It carries out the reaction 1,2-dihexadecanoyl-sn-glycero-3-phosphate + H2O = 1,2-dihexadecanoyl-sn-glycerol + phosphate. The enzyme catalyses 1,2-di-(9Z-octadecenoyl)-sn-glycero-3-phosphate + H2O = 1,2-di-(9Z-octadecenoyl)-sn-glycerol + phosphate. It catalyses the reaction a monoacyl-sn-glycero-3-phosphate + H2O = a monoacylglycerol + phosphate. The catalysed reaction is (9Z)-octadecenoyl-sn-glycero-3-phosphate + H2O = (9Z-octadecenoyl)-glycerol + phosphate. It carries out the reaction a 1-acyl-sn-glycero-3-phosphate + H2O = a 1-acyl-sn-glycerol + phosphate. The enzyme catalyses 1-(9Z-octadecenoyl)-sn-glycero-3-phosphate + H2O = 1-(9Z-octadecenoyl)-sn-glycerol + phosphate. It catalyses the reaction a 1,2-diacyl-sn-glycerol 3-diphosphate + H2O = a 1,2-diacyl-sn-glycero-3-phosphate + phosphate + H(+). The catalysed reaction is sphing-4-enine 1-phosphate + H2O = sphing-4-enine + phosphate. It carries out the reaction an N-acylsphing-4-enine 1-phosphate + H2O = an N-acylsphing-4-enine + phosphate. The enzyme catalyses N-(octanoyl)-sphing-4-enine-1-phosphate + H2O = N-octanoylsphing-4-enine + phosphate. It catalyses the reaction N-(9Z-octadecenoyl)-ethanolamine phosphate + H2O = N-(9Z-octadecenoyl) ethanolamine + phosphate. The catalysed reaction is 1-hexadecanoyl-2-(9Z-octadecenoyl)-sn-glycero-3-phosphate + H2O = 1-hexadecanoyl-2-(9Z-octadecenoyl)-sn-glycerol + phosphate. It functions in the pathway lipid metabolism; phospholipid metabolism. Its activity is regulated as follows. Magnesium-independent phospholipid phosphatase. Insensitive to N-ethylmaleimide. Functionally, magnesium-independent phospholipid phosphatase of the plasma membrane that catalyzes the dephosphorylation of a variety of glycerolipid and sphingolipid phosphate esters including phosphatidate/PA, lysophosphatidate/LPA, diacylglycerol pyrophosphate/DGPP, sphingosine 1-phosphate/S1P and ceramide 1-phosphate/C1P. Also acts on N-oleoyl ethanolamine phosphate/N-(9Z-octadecenoyl)-ethanolamine phosphate, a potential physiological compound. Through its extracellular phosphatase activity allows both the hydrolysis and the cellular uptake of these bioactive lipid mediators from the milieu, regulating signal transduction in different cellular processes. It is for instance essential for the extracellular hydrolysis of S1P and subsequent conversion into intracellular S1P. Involved in the regulation of inflammation, platelets activation, cell proliferation and migration among other processes. May also have an intracellular activity to regulate phospholipid-mediated signaling pathways. The polypeptide is Phospholipid phosphatase 1 (Sus scrofa (Pig)).